The primary structure comprises 285 residues: tRNA-cytidine(32) 2-sulfurtransferase (285 aa).

A PP-loop motif motif is present at residues 48–53 (SGGKDS). Cys-122, Cys-125, and Cys-213 together coordinate [4Fe-4S] cluster.

It belongs to the TtcA family. Homodimer. The cofactor is Mg(2+). [4Fe-4S] cluster is required as a cofactor.

It is found in the cytoplasm. The catalysed reaction is cytidine(32) in tRNA + S-sulfanyl-L-cysteinyl-[cysteine desulfurase] + AH2 + ATP = 2-thiocytidine(32) in tRNA + L-cysteinyl-[cysteine desulfurase] + A + AMP + diphosphate + H(+). It participates in tRNA modification. Catalyzes the ATP-dependent 2-thiolation of cytidine in position 32 of tRNA, to form 2-thiocytidine (s(2)C32). The sulfur atoms are provided by the cysteine/cysteine desulfurase (IscS) system. This Cytophaga hutchinsonii (strain ATCC 33406 / DSM 1761 / CIP 103989 / NBRC 15051 / NCIMB 9469 / D465) protein is tRNA-cytidine(32) 2-sulfurtransferase.